The primary structure comprises 426 residues: Glutamate-1-semialdehyde 2,1-aminomutase (426 aa).

At lysine 265 the chain carries N6-(pyridoxal phosphate)lysine.

The protein belongs to the class-III pyridoxal-phosphate-dependent aminotransferase family. HemL subfamily. Homodimer. Pyridoxal 5'-phosphate is required as a cofactor.

The protein localises to the cytoplasm. The catalysed reaction is (S)-4-amino-5-oxopentanoate = 5-aminolevulinate. Its pathway is porphyrin-containing compound metabolism; protoporphyrin-IX biosynthesis; 5-aminolevulinate from L-glutamyl-tRNA(Glu): step 2/2. The chain is Glutamate-1-semialdehyde 2,1-aminomutase from Erwinia tasmaniensis (strain DSM 17950 / CFBP 7177 / CIP 109463 / NCPPB 4357 / Et1/99).